The following is a 312-amino-acid chain: MRIQLNTIDLQCIIALSCLGQFVHAEANREDLKQIDFQFPVLERAATKTPFPDWLSAFTGLKEWPGLDPPYIPLDFIDFSQIPDYKEYDQNHCDSVPRDSCSFDCHHCTEHDDVYTCSKLSQTFDDGPSASTTKLLDRLKHNSTFFNLGVNIVQHPDIYQRMQKEGHLIGSHTWSHVYLPNVSNEKIIAQIEWSIWAMNATGNHTPKWFRPPYGGIDNRVRAITRQFGLQAVLWDHDTFDWSLLLNDSVITEQEILQNVINWNKSGTGLILEHDSTEKTVDLAIKINKLIGDDQSTVSHCVGGIDYIKEFLS.

A signal peptide spans 1–44; it reads MRIQLNTIDLQCIIALSCLGQFVHAEANREDLKQIDFQFPVLER. A disulfide bond links C117 and C300. The region spanning 118–307 is the NodB homology domain; the sequence is SKLSQTFDDG…SHCVGGIDYI (190 aa). The active-site Proton acceptor is D125. D125 is a binding site for acetate. Co(2+) is bound at residue D126. A glycan (N-linked (GlcNAc...) asparagine) is linked at N142. The Co(2+) site is built by H172 and H176. N-linked (GlcNAc...) asparagine glycans are attached at residues N181 and N199. Y213 is an acetate binding site. N-linked (GlcNAc...) asparagine glycosylation is found at N246 and N263. H273 acts as the Proton donor in catalysis.

The protein belongs to the polysaccharide deacetylase family. As to quaternary structure, monomer. The cofactor is Co(2+). N-glycosylated.

Its subcellular location is the prospore. It catalyses the reaction [(1-&gt;4)-N-acetyl-beta-D-glucosaminyl](n) + n H2O = chitosan + n acetate. In terms of biological role, hydrolyzes the N-acetamido groups of N-acetyl-D-glucosamine residues in chitin to form chitosan and acetate. Chitosan is a component of the spore wall. In Saccharomyces cerevisiae (strain ATCC 204508 / S288c) (Baker's yeast), this protein is Chitin deacetylase 2.